Consider the following 366-residue polypeptide: Galactoside alpha-(1,2)-fucosyltransferase 1 (366 aa).

Residues 1 to 8 (MWPPSHRQ) lie on the Cytoplasmic side of the membrane. A helical; Signal-anchor for type II membrane protein transmembrane segment spans residues 9–25 (LCLAFLLVCVLSVISFF). At 26 to 366 (LHIHQDSFPH…LSSLWTLAKP (341 aa)) the chain is on the lumenal side. N-linked (GlcNAc...) asparagine glycosylation is found at N66, N302, and N328.

The protein belongs to the glycosyltransferase 11 family.

It localises to the golgi apparatus. Its subcellular location is the golgi stack membrane. It catalyses the reaction a beta-D-galactosyl-(1-&gt;4)-N-acetyl-beta-D-glucosaminyl derivative + GDP-beta-L-fucose = an alpha-L-Fuc-(1-&gt;2)-beta-D-Gal-(1-&gt;4)-beta-D-GlcNAc derivative + GDP + H(+). The catalysed reaction is a ganglioside GA1 + GDP-beta-L-fucose = a ganglioside Fuc-GA1 + GDP + H(+). It carries out the reaction a beta-D-Gal-(1-&gt;3)-beta-D-GlcNAc-(1-&gt;3)-beta-D-Gal-(1-&gt;4)-beta-D-Glc-(1&lt;-&gt;1')-Cer(d18:1(4E)) + GDP-beta-L-fucose = alpha-L-fucosyl-(1-&gt;2)- beta-D-galactosyl-(1-&gt;3)-N-acetyl-beta-D-glucosaminyl-(1-&gt;3)-beta-D-galactosyl-(1-&gt;4)-beta-D-glucosyl-(1&lt;-&gt;1')-N-acylsphing-4-enine + GDP + H(+). The enzyme catalyses a neolactoside nLc4Cer(d18:1(4E)) + GDP-beta-L-fucose = a neolactoside IV(2)-alpha-Fuc-nLc4Cer(d18:1(4E)) + GDP + H(+). It catalyses the reaction a ganglioside GM1 + GDP-beta-L-fucose = a ganglioside Fuc-GM1 + GDP + H(+). The catalysed reaction is beta-D-galactosyl-(1-&gt;3)-N-acetyl-D-galactosamine + GDP-beta-L-fucose = alpha-L-fucosyl-(1-&gt;2)-beta-D-galactosyl-(1-&gt;3)-N-acetyl-D-galactosamine + GDP + H(+). Its pathway is protein modification; protein glycosylation. Catalyzes the transfer of L-fucose, from a guanosine diphosphate-beta-L-fucose, to the terminal galactose residue of glycoconjugates through an alpha(1,2) linkage leading to H antigen synthesis that is an intermediate substrate in the synthesis of ABO blood group antigens. H antigen is essential for maturation of the glomerular layer of the main olfactory bulb, in cell migration and early cell-cell contacts during tumor associated angiogenesis. Preferentially fucosylates soluble lactose and to a lesser extent fucosylates glycolipids gangliosides GA1 and GM1a. The chain is Galactoside alpha-(1,2)-fucosyltransferase 1 from Pan troglodytes (Chimpanzee).